The primary structure comprises 168 residues: DAZ-associated protein 2 (168 aa).

Residues 1-13 are compositionally biased toward low complexity; the sequence is MNSKGQYPTQPTY. Positions 1–25 are disordered; it reads MNSKGQYPTQPTYPVQPPGNPVYPQ. The short motif at 39 to 42 is the PPAY element; sequence PPAY. Residue Ser-77 is modified to Phosphoserine.

Interacts with SOX6. Interacts with DAZ1 and DAZL. Interacts with IL17RB. May interact with FAM168B. Interacts with INCA1. Interacts with EIF4G1 and EIF4G2. Interacts (via PPAY motif) with NEDD4 (via WW domains). Interacts with transcription factor TCF4; the interaction results in localization of DAZAP2 to the nucleus. Interacts with transcription factors TCF7 and TCF7L1. Interacts with transcription factor LEF1. Interacts with serine/threonine-protein kinase HIPK2; the interaction results in phosphorylation of DAZAP2 which causes localization of DAZAP2 to the nucleus, reduces interaction of DAZAP2 with HIPK2 and prevents DAZAP2-dependent degradation of HIPK2. Interacts with ubiquitin ligase SIAH1; the interaction is decreased following phosphorylation of DAZAP2 by HIPK2. Interacts with TP53; the interaction is triggered by DNA damage. In terms of processing, ubiquitinated by SMURF2, leading to proteasomal degradation. Ubiquitinated by NEDD4, leading to proteasomal degradation. Following DNA damage, phosphorylated by HIPK2 which promotes DAZAP2 localization to the nucleus, reduces interaction of DAZAP2 with HIPK2 and SIAH1, and prevents DAZAP2-dependent ubiquitination of HIPK2 by E3 ubiquitin-protein ligase SIAH1 and subsequent HIPK2 proteasomal degradation. As to expression, widely expressed. Highly expressed in brain.

It is found in the cytoplasm. The protein localises to the nucleus. It localises to the nucleus speckle. Its subcellular location is the nuclear body. The protein resides in the stress granule. In terms of biological role, in unstressed cells, promotes SIAH1-mediated polyubiquitination and degradation of the serine/threonine-protein kinase HIPK2, probably by acting as a loading factor that potentiates complex formation between HIPK2 and ubiquitin ligase SIAH1. In response to DNA damage, localizes to the nucleus following phosphorylation by HIPK2 and modulates the expression of a subset of TP53/p53 target genes by binding to TP53 at target gene promoters. This limits the expression of a number of cell death-mediating TP53 target genes, reducing DNA damage-induced cell death. Enhances the binding of transcription factor TCF7L2/TCF4, a Wnt signaling pathway effector, to the promoters of target genes. Plays a role in stress granule formation. The sequence is that of DAZ-associated protein 2 (Dazap2) from Mus musculus (Mouse).